Consider the following 753-residue polypeptide: MSKNSEFINLSFLLDHEKEMILGVLKRDEYLKKVEDKRIRKLKNELLEAKRRSGKTHQEASRVCVHCHKTLGLIFDRGDPCQACSLRVCSECRVTGLDGSWKCTVCAKVAQLRIISGEWFLEEKAKRFKQVNVLGTDVVRQSILRRSPGSEETQNQEQAQQCVDKSDTLSSVRQKTTHDGPKKKGFLLSKFRSATRGEIRTPKPESGRSYSLDLDSQNLQSFKSASGSDRGSTTSSDLIDQEAGRRTSKSSYSNGGIPVTQRSPVPSAHSVTSINSREHGFENSMALATIENTCEELTKSHRRNTSGTPSIAVSGTSLSSERSRSEVDLSESFAEDLEDTSSIRSRSVPGALDKDLNSLEDTEDGVDLVSSRFSANTHSLASGLSTNSQAGSDRKRSYLNVPDADSDTTSLNSMMSVYSETGDYGNVKVTGEILLHISYCYKTGGLYIFVKSCRNLATGDEKKQRTDAYVKSYLLPDKSRNNKRKTKIRTGTNPEFNETLKYTISHTQLETRTLQLSVWHYDRFGRNSFLGEVEIAFDSWNFENPCDEWFVLQPKVELAPDISLQYKGELTIVLRYIPPEENLIFPAGQRQEKKIFKRGKKKESSSISGGILEVFIKKAKNLTAVKSGGTSDSFVKGYLLPDDNKATKHKTAVVKKSVNPEWNHTFIFSGLYPQDIKNACLELTIWDKEAFSSNVFLGGVRLNSGSGMSYGKTVDWMDSHGEEQRLWQKMADNPGTSVEGVLMLRSSMAKCRL.

One can recognise a RabBD domain in the interval 7-123; that stretch reads FINLSFLLDH…IISGEWFLEE (117 aa). The FYVE-type zinc finger occupies 64 to 106; it reads CVHCHKTLGLIFDRGDPCQACSLRVCSECRVTGLDGSWKCTVC. Disordered stretches follow at residues 145–279, 297–359, and 380–404; these read RRSP…SREH, LTKS…LNSL, and LASGLSTNSQAGSDRKRSYLNVPDA. The residue at position 147 (S147) is a Phosphoserine. The segment covering 150–174 has biased composition (polar residues); that stretch reads SEETQNQEQAQQCVDKSDTLSSVRQ. Over residues 195–206 the composition is skewed to basic and acidic residues; it reads TRGEIRTPKPES. Positions 214–223 are enriched in polar residues; that stretch reads LDSQNLQSFK. Over residues 224–237 the composition is skewed to low complexity; sequence SASGSDRGSTTSSD. Positions 249-275 are enriched in polar residues; it reads KSSYSNGGIPVTQRSPVPSAHSVTSIN. The span at 380–391 shows a compositional bias: polar residues; sequence LASGLSTNSQAG. 2 C2 domains span residues 429 to 550 and 597 to 717; these read VTGE…DEWF and KRGK…VDWM.

As to quaternary structure, binds RAB27A that has been activated by GTP-binding.

It localises to the membrane. In terms of biological role, may act as Rab effector protein and play a role in vesicle trafficking. Binds phospholipids. This is Synaptotagmin-like protein 5 (Sytl5) from Mus musculus (Mouse).